The following is a 402-amino-acid chain: MKKLLKSALLFAATGSALSLQALPVGNPAEPSLLIDGTMWEGASGDPCDPCATWCDAISIRAGYYGDYVFDRVLKVDVNKTFSGMAATPTQATGNASNTNQPEANGRPNIAYGRHMQDAEWFSNAAFLALNIWDRFDIFCTLGASNGYFKSSSAAFNLVGLIGFSATSSTSTELPMQLPNVGITQGVVEFYTDTSFSWSVGARGALWECGCATLGAEFQYAQSNPKIEVLNVTSSPAQFVIHKPRGYKGASSNFPLPITAGTTEATDTKSATIKYHEWQVGLALSYRLNMLVPYIGVNWSRATFDADTIRIAQPKLKSEILNITTWNPSLLGSTTTLPNNGGKDVLSDVLQIASIQINKMKSRKACGVAVGATLIDADKWSITGEARLINERAAHMNAQFRF.

The first 22 residues, 1-22, serve as a signal peptide directing secretion; the sequence is MKKLLKSALLFAATGSALSLQA.

Belongs to the chlamydial porin (CP) (TC 1.B.2) family. As to quaternary structure, part of a disulfide cross-linked outer membrane complex (COMC) composed of the major outer membrane porin, the small cysteine-rich protein (OmcA) and the large cysteine-rich periplasmic protein (OmcB).

The protein localises to the cell outer membrane. In terms of biological role, in elementary bodies (EBs, the infectious stage, which is able to survive outside the host cell) provides the structural integrity of the outer envelope through disulfide cross-links with the small cysteine-rich protein and the large cysteine-rich periplasmic protein. It has been described in publications as the Sarkosyl-insoluble COMC (Chlamydia outer membrane complex), and serves as the functional equivalent of peptidoglycan. Functionally, permits diffusion of specific solutes through the outer membrane. The sequence is that of Major outer membrane porin (ompA) from Chlamydia psittaci (Chlamydophila psittaci).